A 324-amino-acid chain; its full sequence is Endochitinase 1 (324 aa).

The first 22 residues, 1–22 (MSFLQALSIFLLLLLYVVVGSA), serve as a signal peptide directing secretion. In terms of domain architecture, Chitin-binding type-1 spans 23–64 (EQCGRQAGGALCPGGLCCSQFGWCGSTADYCTVPGCQSQCSG). Disulfide bonds link Cys25–Cys40, Cys34–Cys46, Cys39–Cys53, Cys58–Cys62, Cys95–Cys158, Cys170–Cys178, and Cys277–Cys309. The active-site Proton donor is the Glu139. A propeptide spans 318–324 (GVSVDSM) (removed in mature form).

The protein belongs to the glycosyl hydrolase 19 family. Chitinase class I subfamily.

It carries out the reaction Random endo-hydrolysis of N-acetyl-beta-D-glucosaminide (1-&gt;4)-beta-linkages in chitin and chitodextrins.. Functionally, defense against chitin-containing fungal pathogens. In Gossypium hirsutum (Upland cotton), this protein is Endochitinase 1.